Here is a 476-residue protein sequence, read N- to C-terminus: Glucan endo-1,3-beta-glucosidase 9 (476 aa).

The N-terminal stretch at 1–25 (MARRLFLLLLAVTAGLSLTGTTVRA) is a signal peptide. Asn-88 and Asn-101 each carry an N-linked (GlcNAc...) asparagine glycan. Catalysis depends on Glu-122, which acts as the Proton donor. Residues Asn-184, Asn-216, Asn-277, Asn-320, Asn-342, Asn-374, and Asn-405 are each glycosylated (N-linked (GlcNAc...) asparagine). Cys-364 and Cys-424 are disulfide-bonded. Ser-453 carries GPI-anchor amidated serine lipidation. Positions 454-476 (SSQTPNFFQSWPLLLLFLLSGLF) are cleaved as a propeptide — removed in mature form.

Belongs to the glycosyl hydrolase 17 family. Contains two additional disulfide bonds.

The protein localises to the secreted. The protein resides in the cell wall. Its subcellular location is the cell membrane. It catalyses the reaction Hydrolysis of (1-&gt;3)-beta-D-glucosidic linkages in (1-&gt;3)-beta-D-glucans.. The chain is Glucan endo-1,3-beta-glucosidase 9 from Arabidopsis thaliana (Mouse-ear cress).